A 337-amino-acid chain; its full sequence is Large ribosomal subunit protein uL3 (337 aa).

The segment at 1–29 (MPKINRPRRGSLAFSPRKRAQSPIPKYKS) is disordered.

It belongs to the universal ribosomal protein uL3 family. In terms of assembly, part of the 50S ribosomal subunit. Forms a cluster with proteins L14 and L24e.

Its function is as follows. One of the primary rRNA binding proteins, it binds directly near the 3'-end of the 23S rRNA, where it nucleates assembly of the 50S subunit. The sequence is that of Large ribosomal subunit protein uL3 from Methanoregula boonei (strain DSM 21154 / JCM 14090 / 6A8).